Here is a 380-residue protein sequence, read N- to C-terminus: Alcohol dehydrogenase 2 (380 aa).

Positions 48, 50, 70, 100, 103, 106, 114, and 178 each coordinate Zn(2+). An alcohol-binding residues include T50 and H70. Residue T50 coordinates NAD(+). NAD(+) contacts are provided by residues 203 to 208 (GLGAVG), D227, R232, T273, V296, 296 to 298 (VGV), F323, and R373.

This sequence belongs to the zinc-containing alcohol dehydrogenase family. As to quaternary structure, homodimer. Homotetramer. Requires Zn(2+) as cofactor.

The protein localises to the cytoplasm. It catalyses the reaction a primary alcohol + NAD(+) = an aldehyde + NADH + H(+). It carries out the reaction a secondary alcohol + NAD(+) = a ketone + NADH + H(+). This chain is Alcohol dehydrogenase 2 (ADH2), found in Solanum lycopersicum (Tomato).